A 193-amino-acid polypeptide reads, in one-letter code: ATP-dependent Clp protease proteolytic subunit (193 aa).

S98 (nucleophile) is an active-site residue. H123 is a catalytic residue.

It belongs to the peptidase S14 family. In terms of assembly, fourteen ClpP subunits assemble into 2 heptameric rings which stack back to back to give a disk-like structure with a central cavity, resembling the structure of eukaryotic proteasomes.

The protein localises to the cytoplasm. It carries out the reaction Hydrolysis of proteins to small peptides in the presence of ATP and magnesium. alpha-casein is the usual test substrate. In the absence of ATP, only oligopeptides shorter than five residues are hydrolyzed (such as succinyl-Leu-Tyr-|-NHMec, and Leu-Tyr-Leu-|-Tyr-Trp, in which cleavage of the -Tyr-|-Leu- and -Tyr-|-Trp bonds also occurs).. Functionally, cleaves peptides in various proteins in a process that requires ATP hydrolysis. Has a chymotrypsin-like activity. Plays a major role in the degradation of misfolded proteins. The sequence is that of ATP-dependent Clp protease proteolytic subunit from Histophilus somni (strain 2336) (Haemophilus somnus).